The following is a 595-amino-acid chain: Quinoprotein alcohol dehydrogenase PedH (595 aa).

The first 27 residues, 1-27 (MTRSPRRPLFAVSLVLSAMLLAGAAHA), serve as a signal peptide directing secretion. Gln-87 lines the pyrroloquinoline quinone pocket. Cys-131 and Cys-132 are oxidised to a cystine. Arg-137, Ser-181, Gly-197, and Gly-198 together coordinate pyrroloquinoline quinone. Pr(3+) is bound at residue Glu-199. Trp-263 contributes to the pyrroloquinoline quinone binding site. The Pr(3+) site is built by Asn-281, Asp-323, and Asp-325. The Proton acceptor role is filled by Asp-323. Positions 350, 417, 493, and 557 each coordinate pyrroloquinoline quinone.

It belongs to the bacterial PQQ dehydrogenase family. It depends on Pr(3+) as a cofactor. The cofactor is Nd(3+). La(3+) is required as a cofactor. Ce(3+) serves as cofactor. Requires Sm(3+) as cofactor. It depends on pyrroloquinoline quinone as a cofactor. In terms of processing, the disulfide ring formed between the two adjacent cysteine residues Cys-131 and Cys-132 is essential for efficient electron transfer at pH 7 from PedH to its natural electron acceptor cytochrome c550.

Its subcellular location is the periplasm. It carries out the reaction a primary alcohol + 2 Fe(III)-[cytochrome c] = an aldehyde + 2 Fe(II)-[cytochrome c] + 2 H(+). The catalysed reaction is ethanol + 2 Fe(III)-[cytochrome c] = acetaldehyde + 2 Fe(II)-[cytochrome c] + 2 H(+). It catalyses the reaction butan-1-ol + 2 Fe(III)-[cytochrome c] = butanal + 2 Fe(II)-[cytochrome c] + 2 H(+). The enzyme catalyses butan-2-ol + 2 Fe(III)-[cytochrome c] = butan-2-one + 2 Fe(II)-[cytochrome c] + 2 H(+). It carries out the reaction 2-phenylethanol + 2 Fe(III)-[cytochrome c] = 2-phenylacetaldehyde + 2 Fe(II)-[cytochrome c] + 2 H(+). The catalysed reaction is octan-1-ol + 2 Fe(III)-[cytochrome c] = octanal + 2 Fe(II)-[cytochrome c] + 2 H(+). It catalyses the reaction hexan-1-ol + 2 Fe(III)-[cytochrome c] = hexanal + 2 Fe(II)-[cytochrome c] + 2 H(+). The enzyme catalyses cinnamyl alcohol + 2 Fe(III)-[cytochrome c] = cinnamaldehyde + 2 Fe(II)-[cytochrome c] + 2 H(+). It carries out the reaction farnesol + 2 Fe(III)-[cytochrome c] = farnesal + 2 Fe(II)-[cytochrome c] + 2 H(+). The catalysed reaction is an aldehyde + 2 Fe(III)-[cytochrome c] + H2O = a carboxylate + 2 Fe(II)-[cytochrome c] + 3 H(+). It catalyses the reaction acetaldehyde + 2 Fe(III)-[cytochrome c] + H2O = 2 Fe(II)-[cytochrome c] + acetate + 3 H(+). The enzyme catalyses butanal + 2 Fe(III)-[cytochrome c] + H2O = butanoate + 2 Fe(II)-[cytochrome c] + 3 H(+). It carries out the reaction hexanal + 2 Fe(III)-[cytochrome c] + H2O = hexanoate + 2 Fe(II)-[cytochrome c] + 3 H(+). The catalysed reaction is octanal + 2 Fe(III)-[cytochrome c] + H2O = octanoate + 2 Fe(II)-[cytochrome c] + 3 H(+). Alcohol dehydrogenase that catalyzes the oxidation of a range of substrates, including linear and aromatic primary and secondary alcohols, as well as aldehydes, but only in the presence of lanthanides, allowing bacterial growth with a variety of volatile organic compounds (VOCs) as carbon and energy sources. Is also involved in the transcriptional regulation of pedE and pedH, most likely acting as a lanthanide sensory module. Uses a specific inducible cytochrome c550, encoded by the adjacent gene in the locus, as electron acceptor. The sequence is that of Quinoprotein alcohol dehydrogenase PedH from Pseudomonas putida (strain ATCC 47054 / DSM 6125 / CFBP 8728 / NCIMB 11950 / KT2440).